The primary structure comprises 60 residues: Protein translocase subunit SecE (60 aa).

Residues 31 to 51 (VIVVSTVIFFLVFFYALDLGI) form a helical membrane-spanning segment.

Belongs to the SecE/SEC61-gamma family. Component of the Sec protein translocase complex. Heterotrimer consisting of SecY, SecE and SecG subunits. The heterotrimers can form oligomers, although 1 heterotrimer is thought to be able to translocate proteins. Interacts with the ribosome. Interacts with SecDF, and other proteins may be involved. Interacts with SecA.

The protein resides in the cell membrane. Its function is as follows. Essential subunit of the Sec protein translocation channel SecYEG. Clamps together the 2 halves of SecY. May contact the channel plug during translocation. The chain is Protein translocase subunit SecE from Staphylococcus aureus (strain Mu50 / ATCC 700699).